The sequence spans 499 residues: uncharacterized protein (499 aa).

Residues 6-35 (EAVI…VIER) and 272-282 (YRDGRIFLAGD) contribute to the FAD site.

The protein belongs to the PheA/TfdB FAD monooxygenase family. FAD serves as cofactor.

This is an uncharacterized protein from Bacillus subtilis (strain 168).